Reading from the N-terminus, the 422-residue chain is Keratin, type I cytoskeletal 23 (422 aa).

The segment covering 1–13 (MNSGHSFSQTPSA) has biased composition (polar residues). The head stretch occupies residues 1–71 (MNSGHSFSQT…GRSSPLLGGN (71 aa)). The tract at residues 1 to 73 (MNSGHSFSQT…SSPLLGGNGK (73 aa)) is disordered. The tract at residues 72–107 (GKATMQNLNDRLASYLEKVRALEEANMKLESRILKW) is coil 1A. Residues 72–382 (GKATMQNLND…RLLEGESEGT (311 aa)) enclose the IF rod domain. The tract at residues 108-125 (HQQRDPGSKKDYSQYEEN) is linker 1. The segment at 126–217 (ITHLQEQIVD…KHHEQEMEKH (92 aa)) is coil 1B. A linker 12 region spans residues 218–240 (HVPSDFNVNVKVDTGPREDLIKV). The segment at 241–378 (LEDMRQEYEL…TTYRRLLEGE (138 aa)) is coil 2. The segment at 379 to 422 (SEGTREESKSSMKVSATPKIKAITQETINGRLVLCQVNEIQKHA) is rod-like helical tail.

Belongs to the intermediate filament family. As to quaternary structure, heterotetramer of two type I and two type II keratins.

The protein is Keratin, type I cytoskeletal 23 (KRT23) of Homo sapiens (Human).